The chain runs to 89 residues: Small ribosomal subunit protein uS15 (89 aa).

The segment covering 1 to 21 has biased composition (basic and acidic residues); that stretch reads MSIAAERKAEVIKTNARKDGD. Positions 1-24 are disordered; sequence MSIAAERKAEVIKTNARKDGDTGS.

It belongs to the universal ribosomal protein uS15 family. In terms of assembly, part of the 30S ribosomal subunit. Forms a bridge to the 50S subunit in the 70S ribosome, contacting the 23S rRNA.

One of the primary rRNA binding proteins, it binds directly to 16S rRNA where it helps nucleate assembly of the platform of the 30S subunit by binding and bridging several RNA helices of the 16S rRNA. In terms of biological role, forms an intersubunit bridge (bridge B4) with the 23S rRNA of the 50S subunit in the ribosome. The polypeptide is Small ribosomal subunit protein uS15 (Rhodopseudomonas palustris (strain BisA53)).